The chain runs to 292 residues: Tissue factor (292 aa).

The first 35 residues, 1 to 35 (MATPNGPRVPCPQAAVARALLFGLVLIQGAGVAGT), serve as a signal peptide directing secretion. Over 36-248 (TDVVVAYNIT…TSHEKVLSTE (213 aa)) the chain is Extracellular. N-linked (GlcNAc...) asparagine glycosylation occurs at N43. The WKS motif motif lies at 46-48 (WKS). The cysteines at positions 81 and 89 are disulfide-linked. N-linked (GlcNAc...) asparagine glycans are attached at residues N153 and N181. Cysteines 215 and 238 form a disulfide. The helical transmembrane segment at 249 to 271 (LFFIIGTVMLVIIIFIVVLSVSL) threads the bilayer. At 272 to 292 (HKCRKVRAERSGKENTPLNAA) the chain is on the cytoplasmic side. C274 carries the S-palmitoyl cysteine lipid modification.

The protein belongs to the tissue factor family. Interacts with HSPE; the interaction, inhibited by heparin, promotes the generation of activated factor X and activates coagulation in the presence of activated factor VII.

Its subcellular location is the membrane. Functionally, initiates blood coagulation by forming a complex with circulating factor VII or VIIa. The [TF:VIIa] complex activates factors IX or X by specific limited proteolysis. TF plays a role in normal hemostasis by initiating the cell-surface assembly and propagation of the coagulation protease cascade. The polypeptide is Tissue factor (F3) (Bos taurus (Bovine)).